The sequence spans 60 residues: Large ribosomal subunit protein bL33 (60 aa).

The protein belongs to the bacterial ribosomal protein bL33 family.

The chain is Large ribosomal subunit protein bL33 from Chlorobium phaeobacteroides (strain DSM 266 / SMG 266 / 2430).